We begin with the raw amino-acid sequence, 65 residues long: Large ribosomal subunit protein bL35 (65 aa).

This sequence belongs to the bacterial ribosomal protein bL35 family.

This is Large ribosomal subunit protein bL35 from Caldicellulosiruptor bescii (strain ATCC BAA-1888 / DSM 6725 / KCTC 15123 / Z-1320) (Anaerocellum thermophilum).